The primary structure comprises 106 residues: ATPase inhibitor, mitochondrial (106 aa).

Residues 1–25 (MAGSALAVRARFGVWGMKVLQTRGF) constitute a mitochondrion transit peptide. An N-terminal inhibitory region region spans residues 26 to 52 (VSDSSDSMDTGAGSIREAGGAFGKREK). Residues 26–58 (VSDSSDSMDTGAGSIREAGGAFGKREKAEEDRY) are disordered. Ser-39 is modified (phosphoserine). Over residues 48 to 58 (GKREKAEEDRY) the composition is skewed to basic and acidic residues. Positions 60 to 106 (REKTKEQLAALRKHHEDEIDHHSKEIERLQKQIERHKKKIQQLKNNH) form a coiled coil. Residues 74 to 106 (HEDEIDHHSKEIERLQKQIERHKKKIQQLKNNH) are antiparallel alpha-helical coiled coil region. At Lys-103 the chain carries N6-succinyllysine.

The protein belongs to the ATPase inhibitor family. Homodimer; represents the active form and is present at a pH value below 6.5. Homotetramer; represents the inactive form and is present at a pH value above 7.0.

The protein resides in the mitochondrion. Its function is as follows. Endogenous F(1)F(o)-ATPase inhibitor limiting ATP depletion when the mitochondrial membrane potential falls below a threshold and the F(1)F(o)-ATP synthase starts hydrolyzing ATP to pump protons out of the mitochondrial matrix. Required to avoid the consumption of cellular ATP when the F(1)F(o)-ATP synthase enzyme acts as an ATP hydrolase. Indirectly acts as a regulator of heme synthesis in erythroid tissues: regulates heme synthesis by modulating the mitochondrial pH and redox potential, allowing FECH to efficiently catalyze the incorporation of iron into protoporphyrin IX to produce heme. This chain is ATPase inhibitor, mitochondrial, found in Mus musculus (Mouse).